Here is a 194-residue protein sequence, read N- to C-terminus: Imidazoleglycerol-phosphate dehydratase (194 aa).

Belongs to the imidazoleglycerol-phosphate dehydratase family.

It localises to the cytoplasm. The enzyme catalyses D-erythro-1-(imidazol-4-yl)glycerol 3-phosphate = 3-(imidazol-4-yl)-2-oxopropyl phosphate + H2O. It functions in the pathway amino-acid biosynthesis; L-histidine biosynthesis; L-histidine from 5-phospho-alpha-D-ribose 1-diphosphate: step 6/9. The chain is Imidazoleglycerol-phosphate dehydratase from Limosilactobacillus fermentum (strain NBRC 3956 / LMG 18251) (Lactobacillus fermentum).